The sequence spans 215 residues: Pyrrolidone-carboxylate peptidase (215 aa).

Catalysis depends on residues Glu-78, Cys-141, and His-165.

Belongs to the peptidase C15 family. In terms of assembly, homotetramer.

It localises to the cytoplasm. It catalyses the reaction Release of an N-terminal pyroglutamyl group from a polypeptide, the second amino acid generally not being Pro.. Functionally, removes 5-oxoproline from various penultimate amino acid residues except L-proline. The chain is Pyrrolidone-carboxylate peptidase from Streptococcus suis (strain 98HAH33).